The sequence spans 402 residues: NADH-quinone oxidoreductase subunit D (402 aa).

Belongs to the complex I 49 kDa subunit family. NDH-1 is composed of 14 different subunits. Subunits NuoB, C, D, E, F, and G constitute the peripheral sector of the complex.

It localises to the cell inner membrane. The enzyme catalyses a quinone + NADH + 5 H(+)(in) = a quinol + NAD(+) + 4 H(+)(out). NDH-1 shuttles electrons from NADH, via FMN and iron-sulfur (Fe-S) centers, to quinones in the respiratory chain. The immediate electron acceptor for the enzyme in this species is believed to be ubiquinone. Couples the redox reaction to proton translocation (for every two electrons transferred, four hydrogen ions are translocated across the cytoplasmic membrane), and thus conserves the redox energy in a proton gradient. The sequence is that of NADH-quinone oxidoreductase subunit D from Protochlamydia amoebophila (strain UWE25).